A 266-amino-acid polypeptide reads, in one-letter code: Norfluorocurarine synthase 1 (266 aa).

Residues 11 to 121 (HFVLVHGAGH…VMPDAVNPPS (111 aa)) form the AB hydrolase-1 domain. Residues Ser-86, Asp-216, and His-244 contribute to the active site.

This sequence belongs to the AB hydrolase superfamily. Homodimer.

It catalyses the reaction 17-dehydropreakuammicine + H2O = norfluorocurarine + methanol + CO2. Its pathway is alkaloid biosynthesis. Functionally, hydrolase involved in the biosynthesis of curare monoterpene indole alkaloids (MIAs), natural products such as diaboline, a pharmacologically active compound used to regulate blood pressure. Curare alkaloids act as animal glycine receptor antagonists. Catalyzes the conversion of dehydropreakuammicine to norfluorocurarine. The protein is Norfluorocurarine synthase 1 of Strychnos sp.